Reading from the N-terminus, the 813-residue chain is MPGGMGFPSDPALLPRVQAHIRKFPGTKYFKPELVAYDLQQEHPEYQRKNHKVFMGMVREALERIQLVAKEENDEKMEEKEAMDDVQEIPIVKALETRKRKAPAAGRKSTGQAAAAKEVVLSDDSEDERAARQLEKQIESLKTNRANKTVLNLYTKKSAPSTPVSTPKNQATKKPPGASAAPPALPRGLGAVSDTISPRESHVKFEHIGGADRQFLEVCRLAMHLKRPKTFATLGVDPPRGFIVHGPPGCGKTMFAQAVAGELAIPMLQLAATELVSGVSGETEEKIRRLFDTAKQNSPCILILDDIDAIAPRRETAQREMERRVVSQLCSSLDELVLPPREKPLKDQLTFGDDGSVAIIGDSPTAAGAGVLVIGTTSRPDAVDGGLRRAGRFENEISLGIPDETAREKILEKICKVNLAGDVTLKQIAKLTPGYVGADLQALIREAAKVAIDRVFDTIVVKNEGHKNLTVEQIKEELDRVLAWLQGDDDPSALSELNGGLQISFEDFERALSTIQPAAKREGFATVPDVSWDDIGALVEVRKQLEWSILYPIKRADDFAALGIDCRPQGILLCGPPGCGKTLLAKAVANETGMNFISVKGPELLNMYVGESERAVRTVFQRARDSQPCVIFFDEIDALVPKRSHGESSGGARLVNQLLTEMDGVEGRQKVFLIGATNRPDIVDAAILRPGRLDKILFVDFPSVEDRVDILRKSTKNGTRPMLGEDIDFHEIAQLPELAGFTGADLAALIHESSLLALQARVLENDESVKGVGMRHFREAASRIRPSVTEADRKKYEHMKKIYGLKQATPPSV.

2 coiled-coil regions span residues 58–89 (VREA…VQEI) and 122–152 (SDDS…TVLN). Disordered regions lie at residues 97–131 (TRKR…ERAA) and 152–193 (NLYT…GAVS). A compositionally biased stretch (polar residues) spans 158–172 (SAPSTPVSTPKNQAT). A compositionally biased stretch (low complexity) spans 175–191 (PPGASAAPPALPRGLGA). Residues 246 to 253 (GPPGCGKT) and 575 to 582 (GPPGCGKT) each bind ATP.

The protein belongs to the AAA ATPase family. Found in a complex composed of ced-3, ced-4 and mac-1 or of ced-9, ced-4 and mac-1. Within the complex, interacts with ced-4.

Probably together with ced-9, plays a modest role in preventing ced-4 and caspase ced-3-mediated apoptosis. This is Protein mac-1 from Caenorhabditis elegans.